Reading from the N-terminus, the 107-residue chain is Large ribosomal subunit protein uL24 (107 aa).

Belongs to the universal ribosomal protein uL24 family. As to quaternary structure, part of the 50S ribosomal subunit.

Its function is as follows. One of two assembly initiator proteins, it binds directly to the 5'-end of the 23S rRNA, where it nucleates assembly of the 50S subunit. In terms of biological role, one of the proteins that surrounds the polypeptide exit tunnel on the outside of the subunit. The chain is Large ribosomal subunit protein uL24 from Coxiella burnetii (strain Dugway 5J108-111).